The chain runs to 407 residues: Protein ATC1/LIC4 (407 aa).

It is found in the cytoplasm. The protein resides in the nucleus. In terms of biological role, involved in cation homeostasis and in the regulation of the cation stress signaling cascades. This Eremothecium gossypii (strain ATCC 10895 / CBS 109.51 / FGSC 9923 / NRRL Y-1056) (Yeast) protein is Protein ATC1/LIC4 (ATC1).